The primary structure comprises 423 residues: Endochitinase 1 (423 aa).

An N-terminal signal peptide occupies residues Met1 to Ala22. The GH18 domain maps to Tyr39–Pro401. N-linked (GlcNAc...) asparagine glycans are attached at residues Asn74, Asn78, and Asn96. Chitin is bound by residues Gly103–Thr104 and Gly130–Thr133. Glu172 (proton donor) is an active-site residue. Chitin contacts are provided by residues Tyr173 and Met238–Asp241. An N-linked (GlcNAc...) asparagine glycan is attached at Asn248. Residue Trp378 participates in chitin binding. The interval Ala380–Ala423 is disordered. The segment covering Asp383–Leu407 has biased composition (polar residues). Residues Ser413–Ala423 are compositionally biased toward basic and acidic residues.

Belongs to the glycosyl hydrolase 18 family. Chitinase class V subfamily.

It localises to the secreted. It catalyses the reaction Random endo-hydrolysis of N-acetyl-beta-D-glucosaminide (1-&gt;4)-beta-linkages in chitin and chitodextrins.. In terms of biological role, secreted chitinase involved in the degradation of chitin, a component of the cell walls of fungi and exoskeletal elements of some animals (including worms and arthropods). Participates in the infection process and directly acts in the penetration process of the host cuticle. In Metarhizium anisopliae (Entomophthora anisopliae), this protein is Endochitinase 1 (chit1).